Reading from the N-terminus, the 156-residue chain is 6,7-dimethyl-8-ribityllumazine synthase (156 aa).

5-amino-6-(D-ribitylamino)uracil is bound by residues W33, 64–66 (SVE), and 86–88 (VIL). 91-92 (ET) is a (2S)-2-hydroxy-3-oxobutyl phosphate binding site. H94 acts as the Proton donor in catalysis. I119 contacts 5-amino-6-(D-ribitylamino)uracil. R133 contributes to the (2S)-2-hydroxy-3-oxobutyl phosphate binding site.

It belongs to the DMRL synthase family.

The catalysed reaction is (2S)-2-hydroxy-3-oxobutyl phosphate + 5-amino-6-(D-ribitylamino)uracil = 6,7-dimethyl-8-(1-D-ribityl)lumazine + phosphate + 2 H2O + H(+). It functions in the pathway cofactor biosynthesis; riboflavin biosynthesis; riboflavin from 2-hydroxy-3-oxobutyl phosphate and 5-amino-6-(D-ribitylamino)uracil: step 1/2. Functionally, catalyzes the formation of 6,7-dimethyl-8-ribityllumazine by condensation of 5-amino-6-(D-ribitylamino)uracil with 3,4-dihydroxy-2-butanone 4-phosphate. This is the penultimate step in the biosynthesis of riboflavin. This Tropheryma whipplei (strain TW08/27) (Whipple's bacillus) protein is 6,7-dimethyl-8-ribityllumazine synthase.